The primary structure comprises 303 residues: Aquaporin-7 (303 aa).

At 1–21 (MAPRSVLETIQSVLQKNMVRE) the chain is on the cytoplasmic side. S5 carries the phosphoserine modification. The helical transmembrane segment at 22-39 (FLAEFLSTYVMMVFGLGS) threads the bilayer. Topologically, residues 40–52 (VAHMVLGENSGSY) are extracellular. Residues 53–70 (LGVNLGFGFGVTMGVHVA) traverse the membrane as a helical segment. At 71–74 (GGIS) the chain is on the cytoplasmic side. An intramembrane region (discontinuously helical) is located at residues 75 to 88 (GAHMNAAVTFTNCA). Residues 79-81 (NAA) carry the NPA 1 motif. The Cytoplasmic portion of the chain corresponds to 89–96 (LGRMTWKK). A helical membrane pass occupies residues 97-117 (FPVYVLGQFLGSFSAAATTYL). At 118-152 (IFYGAINHFAGGDLLVTGSKATANIFATYLPEYMT) the chain is on the extracellular side. The chain crosses the membrane as a helical span at residues 153–173 (LWRGFLDEAFVTGMLQLCLFA). Residues 174–185 (ITDKKNSPALQG) are Cytoplasmic-facing. A helical transmembrane segment spans residues 186 to 202 (TEPLVIGILVTVLGVSL). The Extracellular segment spans residues 203 to 206 (GMNS). The segment at residues 207–220 (GYAINPSRDLPPRL) is an intramembrane region (discontinuously helical). Positions 211 to 213 (NPS) match the NPA 2 motif. The Extracellular segment spans residues 221–238 (FTFIAGWGKQVFRAGNNW). Residues 239-260 (WWVPVVAPLLGAYLGGIVYLGL) traverse the membrane as a helical segment. Residues 261-303 (IHPSIPQDPQRLENFTARDQKVTASYKNAASANISGSVPLEHF) are Cytoplasmic-facing.

The protein belongs to the MIP/aquaporin (TC 1.A.8) family. In terms of assembly, homotetramer; each monomer provides an independent glycerol/water pore. Two homotetramers on opposing membranes can dimerize, forming a cell-cell junction. Interacts with PLIN1. In terms of processing, phosphorylation by PKA could prevent the interaction with PLIN1. Detected in proximal tubules in kidney. Detected in the capillary network between muscle fibers in skeletal muscle and heart, and in spermatids and on spermatozoa tails in testis and epididymis. Detected in white and brown adipose tissue, especially on small blood vessels (at protein level). Detected in kidney and white adipose tissue.

It is found in the cell membrane. The protein localises to the cytoplasmic vesicle membrane. It localises to the lipid droplet. The enzyme catalyses glycerol(in) = glycerol(out). It catalyses the reaction H2O(in) = H2O(out). The catalysed reaction is urea(in) = urea(out). Glycerol transport is regulated by pH, with the porin being permeable to glycerol at pH 7.4 but not at pH 5.5. Water permeability, however, is not influenced by pH. In terms of biological role, aquaglyceroporins form homotetrameric transmembrane channels, with each monomer independently mediating glycerol and water transport across the plasma membrane along their osmotic gradient. Could also be permeable to urea. Mediates the efflux of glycerol, formed upon triglyceride hydrolysis, to avoid its accumulation in adipocytes and to make it available to other tissues. In the kidney, mediates the reabsorption of glycerol, preventing its loss in urine, again participating to energy homeostasis. In pancreatic beta cells, it also mediates the efflux of glycerol, regulating its intracellular levels. This Mus musculus (Mouse) protein is Aquaporin-7.